The following is a 446-amino-acid chain: Zinc finger protein BALDIBIS (446 aa).

A disordered region spans residues 20 to 53 (EHIAPNPNPNPNPTSSNSAKRKRNLPGNPDPDAE). Phosphoserine is present on S58. C2H2-type zinc fingers lie at residues 68-90 (FICE…RRGH) and 110-140 (YICP…SRKH). Positions 132–139 (IKKHFSRK) match the Nuclear localization signal motif. Residues 145-168 (WKCDKCSKKYAVMSDWKAHSKICG) form a C2H2-type 2; degenerate zinc finger. C147, C150, H163, C167, C174, C176, H189, and C193 together coordinate Zn(2+). The CCHC-type 2; atypical zinc finger occupies 172–195 (YRCDCGTLFSRKDSFITHRAFCDA). Residues 182–194 (RKDSFITHRAFCD) are SHR-binding. The interval 425–446 (HNLPDSSPPASTDGTPTADMNQ) is disordered. Residues 427–446 (LPDSSPPASTDGTPTADMNQ) are compositionally biased toward polar residues.

In terms of assembly, binds to RGA and SCL3 competitively in the nucleus. Expressed in roots, especially in vascular initials, cortex, endodermis, and quiescent center (QC).

It is found in the nucleus. In terms of biological role, transcription factor that, together with JKD, regulates tissue boundaries and asymmetric cell division in roots by a rapid up-regulation of 'SCARECROW' (SCR), thus controlling the nuclear localization of 'SHORT-ROOT' (SHR) and restricting its action. Confines CYCD6 expression to the cortex-endodermis initial/daughter (CEI/CEID) tissues. Binds DNA via its zinc fingers. Recognizes and binds to SCL3 promoter sequence 5'-AGACAA-3' to promote its expression when in complex with RGA. The protein is Zinc finger protein BALDIBIS of Arabidopsis thaliana (Mouse-ear cress).